We begin with the raw amino-acid sequence, 361 residues long: Peptide chain release factor 1 (361 aa).

Q235 is subject to N5-methylglutamine.

The protein belongs to the prokaryotic/mitochondrial release factor family. Methylated by PrmC. Methylation increases the termination efficiency of RF1.

Its subcellular location is the cytoplasm. Peptide chain release factor 1 directs the termination of translation in response to the peptide chain termination codons UAG and UAA. In Chlamydia abortus (strain DSM 27085 / S26/3) (Chlamydophila abortus), this protein is Peptide chain release factor 1.